A 299-amino-acid chain; its full sequence is 4-hydroxybenzoate octaprenyltransferase (299 aa).

7 helical membrane passes run 34 to 54 (IGSL…ADGL), 57 to 77 (LWTL…GCVI), 108 to 128 (LWVF…LNWL), 163 to 183 (WGIP…GWLL), 221 to 241 (FDLV…ALVD), 245 to 265 (DLGA…AYEF), and 277 to 297 (FRAF…IAVA).

It belongs to the UbiA prenyltransferase family. Requires Mg(2+) as cofactor.

The protein resides in the cell inner membrane. It catalyses the reaction all-trans-octaprenyl diphosphate + 4-hydroxybenzoate = 4-hydroxy-3-(all-trans-octaprenyl)benzoate + diphosphate. It participates in cofactor biosynthesis; ubiquinone biosynthesis. In terms of biological role, catalyzes the prenylation of para-hydroxybenzoate (PHB) with an all-trans polyprenyl group. Mediates the second step in the final reaction sequence of ubiquinone-8 (UQ-8) biosynthesis, which is the condensation of the polyisoprenoid side chain with PHB, generating the first membrane-bound Q intermediate 3-octaprenyl-4-hydroxybenzoate. This chain is 4-hydroxybenzoate octaprenyltransferase, found in Xanthomonas oryzae pv. oryzae (strain MAFF 311018).